Reading from the N-terminus, the 394-residue chain is Flap endonuclease 1-A (394 aa).

The N-domain stretch occupies residues 1–105 (MGIKGLTGLL…GVLSKRLERR (105 aa)). A Mg(2+)-binding site is contributed by Asp-34. 2 residues coordinate DNA: Arg-47 and Arg-71. Mg(2+) is bound by residues Asp-87, Glu-159, Glu-161, Asp-180, and Asp-182. The tract at residues 123–254 (DVDRFSRRTV…KSALKLIREY (132 aa)) is I-domain. Glu-159 is a DNA binding site. Residues Gly-232 and Asp-234 each coordinate DNA. Residue Asp-234 participates in Mg(2+) binding. An interaction with PCNA region spans residues 341 to 349 (QQGRLDGFF). The disordered stretch occupies residues 356-375 (KAAAPAPVGKAKGKGKVDAK).

It belongs to the XPG/RAD2 endonuclease family. FEN1 subfamily. In terms of assembly, interacts with PCNA. Three molecules of FEN1 bind to one PCNA trimer with each molecule binding to one PCNA monomer. PCNA stimulates the nuclease activity without altering cleavage specificity. The cofactor is Mg(2+). Post-translationally, phosphorylated. Phosphorylation upon DNA damage induces relocalization to the nuclear plasma.

It is found in the nucleus. The protein resides in the nucleolus. It localises to the nucleoplasm. The protein localises to the mitochondrion. Functionally, structure-specific nuclease with 5'-flap endonuclease and 5'-3' exonuclease activities involved in DNA replication and repair. During DNA replication, cleaves the 5'-overhanging flap structure that is generated by displacement synthesis when DNA polymerase encounters the 5'-end of a downstream Okazaki fragment. It enters the flap from the 5'-end and then tracks to cleave the flap base, leaving a nick for ligation. Also involved in the long patch base excision repair (LP-BER) pathway, by cleaving within the apurinic/apyrimidinic (AP) site-terminated flap. Acts as a genome stabilization factor that prevents flaps from equilibrating into structures that lead to duplications and deletions. Also possesses 5'-3' exonuclease activity on nicked or gapped double-stranded DNA, and exhibits RNase H activity. Also involved in replication and repair of rDNA and in repairing mitochondrial DNA. This chain is Flap endonuclease 1-A, found in Laccaria bicolor (strain S238N-H82 / ATCC MYA-4686) (Bicoloured deceiver).